We begin with the raw amino-acid sequence, 346 residues long: Aspartate-semialdehyde dehydrogenase (346 aa).

NADP(+) contacts are provided by residues 13-16 (TGAV) and 41-42 (RS). Position 98 is a phosphoserine (serine 98). Arginine 101 is a binding site for phosphate. Cysteine 130 serves as the catalytic Acyl-thioester intermediate. Tyrosine 146 is modified (phosphotyrosine). Glutamine 157 contributes to the substrate binding site. 160–161 (SG) is a binding site for NADP(+). Residue lysine 221 coordinates phosphate. Position 243 (arginine 243) interacts with substrate. Histidine 250 (proton acceptor) is an active-site residue. Asparagine 324 is a binding site for NADP(+).

This sequence belongs to the aspartate-semialdehyde dehydrogenase family. In terms of assembly, homodimer.

The enzyme catalyses L-aspartate 4-semialdehyde + phosphate + NADP(+) = 4-phospho-L-aspartate + NADPH + H(+). It participates in amino-acid biosynthesis; L-lysine biosynthesis via DAP pathway; (S)-tetrahydrodipicolinate from L-aspartate: step 2/4. It functions in the pathway amino-acid biosynthesis; L-methionine biosynthesis via de novo pathway; L-homoserine from L-aspartate: step 2/3. Its pathway is amino-acid biosynthesis; L-threonine biosynthesis; L-threonine from L-aspartate: step 2/5. Functionally, catalyzes the NADPH-dependent formation of L-aspartate-semialdehyde (L-ASA) by the reductive dephosphorylation of L-aspartyl-4-phosphate. This is Aspartate-semialdehyde dehydrogenase from Bacillus subtilis (strain 168).